A 387-amino-acid polypeptide reads, in one-letter code: Mannose-6-phosphate isomerase (387 aa).

The protein belongs to the N-acylglucosamine 2-epimerase family.

The enzyme catalyses D-mannose 6-phosphate = D-fructose 6-phosphate. This chain is Mannose-6-phosphate isomerase (pmi), found in Rhizobium meliloti (strain 1021) (Ensifer meliloti).